Reading from the N-terminus, the 368-residue chain is Cobalt-precorrin-5B C(1)-methyltransferase (368 aa).

Belongs to the CbiD family.

It catalyses the reaction Co-precorrin-5B + S-adenosyl-L-methionine = Co-precorrin-6A + S-adenosyl-L-homocysteine. It functions in the pathway cofactor biosynthesis; adenosylcobalamin biosynthesis; cob(II)yrinate a,c-diamide from sirohydrochlorin (anaerobic route): step 6/10. Catalyzes the methylation of C-1 in cobalt-precorrin-5B to form cobalt-precorrin-6A. This chain is Cobalt-precorrin-5B C(1)-methyltransferase, found in Brucella abortus (strain S19).